The chain runs to 274 residues: tRNA (guanine-N(7)-)-methyltransferase (274 aa).

A disordered region spans residues 16-40; the sequence is ASASRGAATGSRGVAPAVPRGGAPA. Residues E106, E131, D158, and D181 each contribute to the S-adenosyl-L-methionine site. D181 is a catalytic residue. Substrate is bound by residues K185, D217, and 252 to 255; that span reads TKFE.

Belongs to the class I-like SAM-binding methyltransferase superfamily. TrmB family.

The catalysed reaction is guanosine(46) in tRNA + S-adenosyl-L-methionine = N(7)-methylguanosine(46) in tRNA + S-adenosyl-L-homocysteine. Its pathway is tRNA modification; N(7)-methylguanine-tRNA biosynthesis. In terms of biological role, catalyzes the formation of N(7)-methylguanine at position 46 (m7G46) in tRNA. In Verminephrobacter eiseniae (strain EF01-2), this protein is tRNA (guanine-N(7)-)-methyltransferase.